Consider the following 174-residue polypeptide: Cytoglobin-1 (174 aa).

The Globin domain occupies 15–165 (SLTEEDVCVI…LYWQMNRVYA (151 aa)). His-78 and His-110 together coordinate heme b.

It belongs to the globin family. Monomeric. Expressed in all tissues examined with highest levels in brain, eye, gut and heart.

The protein localises to the cytoplasm. The protein resides in the nucleus. The catalysed reaction is Fe(II)-heme b-[protein] + nitric oxide + O2 = Fe(III)-heme b-[protein] + nitrate. It catalyses the reaction Fe(III)-heme b-[protein] + nitric oxide + H2O = Fe(II)-heme b-[protein] + nitrite + 2 H(+). The enzyme catalyses 2 superoxide + 2 H(+) = H2O2 + O2. It carries out the reaction H2O2 + AH2 = A + 2 H2O. In terms of biological role, probable multifunctional globin with a hexacoordinated heme iron required for the catalysis of various reactions depending on redox condition of the cell as well as oxygen availability. Has a nitric oxide dioxygenase (NOD) activity and is most probably involved in cell-mediated and oxygen-dependent nitric oxide consumption. Under normoxic conditions functions as a nitric oxide dioxygenase (NOD) but under hypoxic conditions the globin may switch its function to that of a nitrite (NO2) reductase (NiR), generating nitric oxide. Could also have peroxidase and superoxide dismutase activities, detoxifying reactive oxygen species and protecting cells against oxidative stress. Also binds dioxygen with low affinity and could function as an oxygen sensor but has probably no function as a respiratory oxygen carrier. The protein is Cytoglobin-1 (cygb1) of Danio rerio (Zebrafish).